Here is a 348-residue protein sequence, read N- to C-terminus: Zinc transporter ZIP13 (348 aa).

Over 1 to 45 the chain is Cytoplasmic; that stretch reads MMIQTAVAQAKTAPAGPGPWSIKDLVDLQYLDELMSIDNLDVWFC. A helical transmembrane segment spans residues 46–66; it reads SLVGSIAIGLSGIFPLLVIPI. The Lumenal segment spans residues 67–83; the sequence is EAGTALKTEAGCQKLKK. The chain crosses the membrane as a helical span at residues 84-104; that stretch reads LLSFAIGGLLGDVFLHLLPEA. The Cytoplasmic portion of the chain corresponds to 105 to 118; the sequence is WAYTSSPGGSHRHY. A helical transmembrane segment spans residues 119-139; the sequence is CTQGLWVIGGLMSFLTLEKMF. Over 140-219 the chain is Lumenal; it reads PDEVGDPETK…CIDNFTHGLA (80 aa). The tract at residues 144 to 192 is disordered; sequence GDPETKTSFQRTTSSSSDLSSQFSVSPQTNGICSNNNSDSKPKTDISPY. Low complexity predominate over residues 149 to 169; that stretch reads KTSFQRTTSSSSDLSSQFSVS. The segment covering 170–182 has biased composition (polar residues); it reads PQTNGICSNNNSD. Residues 220–240 form a helical membrane-spanning segment; sequence VAGSFLVSRKVGFLTTFAILL. Positions 241–246 match the XEXPHE-motif motif; sequence HEIPHE. Residues 241-262 lie on the Cytoplasmic side of the membrane; sequence HEIPHEVGDFAILLRAGFDRWK. Residues 263-283 form a helical membrane-spanning segment; it reads AARMQLSTALGGVLGACFALC. Over 284–294 the chain is Lumenal; it reads SQSQHGAENAT. Residues 295 to 315 form a helical membrane-spanning segment; the sequence is TWILPFTSGGFLYIALVNVVP. Topologically, residues 316 to 326 are cytoplasmic; the sequence is DLLEETNPRNS. Residues 327 to 347 traverse the membrane as a helical segment; that stretch reads LLQVLLLFSGIGVMALLSIAM. Residue aspartate 348 is a topological domain, lumenal.

The protein belongs to the ZIP transporter (TC 2.A.5) family. Homodimer.

The protein localises to the golgi apparatus membrane. It is found in the cytoplasmic vesicle membrane. The protein resides in the endoplasmic reticulum membrane. The catalysed reaction is Zn(2+)(in) = Zn(2+)(out). Its function is as follows. Functions as a zinc transporter transporting Zn(2+) from the Golgi apparatus to the cytosol and thus influences the zinc level at least in areas of the cytosol. The polypeptide is Zinc transporter ZIP13 (Danio rerio (Zebrafish)).